The following is a 731-amino-acid chain: Zinc finger protein 615 (731 aa).

The KRAB domain occupies 8-79; that stretch reads LTLEDVAVDF…EDEIYSRICS (72 aa). 19 consecutive C2H2-type zinc fingers follow at residues 204-226, 232-254, 260-282, 288-310, 316-338, 344-366, 372-394, 400-422, 428-450, 456-478, 484-506, 512-534, 540-562, 568-590, 596-618, 624-646, 652-674, 680-702, and 708-730; these read HVCSECGKAFLKLSQFIDHQRVH, HVCSMCGKAFSRKSRLMDHQRTH, YECTECDKTFLKKSQLNIHQKTH, YTCSQCGKAFIKKCRLIYHQRTH, HGCSVCGKAFSTKFSLTTHQKTH, YICSECGKGFIEKRRLTAHHRTH, FICNKCGKGFTLKNSLITHQQTH, YTCSECGKGFSMKHCLMVHQRTH, YKCNECGKGFALKSPLIRHQRTH, YVCTECRKGFTMKSDLIVHQRTH, YICNDCGKGFTVKSRLIVHQRTH, YVCGECGKGFPAKIRLMGHQRTH, YICNECGKGFTEKSHLNVHRRTH, YVCSECGKGLTGKSMLIAHQRTH, YICNECGKGFTMKSTLSIHQQTH, YKCNECDKTFRKKTCLIQHQRFH, FACTECGKFSLRKNDLITHQRIH, YKCSDCGKAFTTKSGLNVHQRKH, and YGCSDCGKAFAHLSILVKHRRIH.

This sequence belongs to the krueppel C2H2-type zinc-finger protein family.

Its subcellular location is the nucleus. May be involved in transcriptional regulation. The chain is Zinc finger protein 615 (ZNF615) from Homo sapiens (Human).